Consider the following 77-residue polypeptide: U14-theraphotoxin-Cg1b (77 aa).

Positions 1–21 are cleaved as a signal peptide; that stretch reads MKTSVLLVILGIAAITVQCTA. A propeptide spanning residues 22-49 is cleaved from the precursor; it reads SESVEQDSLRTFVDAVLGWNAEMASEAR. Intrachain disulfides connect Cys-50–Cys-64, Cys-57–Cys-69, and Cys-63–Cys-75.

This sequence belongs to the neurotoxin 10 (Hwtx-1) family. 65 (Jztx-21) subfamily. In terms of tissue distribution, expressed by the venom gland.

It is found in the secreted. Functionally, probable ion channel inhibitor. In Chilobrachys guangxiensis (Chinese earth tiger tarantula), this protein is U14-theraphotoxin-Cg1b.